The primary structure comprises 97 residues: Citrate lyase acyl carrier protein (97 aa).

Position 14 is an O-(phosphoribosyl dephospho-coenzyme A)serine (Ser14).

The protein belongs to the CitD family. As to quaternary structure, oligomer with a subunit composition of (alpha,beta,gamma)6.

It localises to the cytoplasm. In terms of biological role, covalent carrier of the coenzyme of citrate lyase. The sequence is that of Citrate lyase acyl carrier protein from Lactobacillus acidophilus (strain ATCC 700396 / NCK56 / N2 / NCFM).